Here is a 490-residue protein sequence, read N- to C-terminus: Cytochrome P450 71A19 (490 aa).

A helical membrane pass occupies residues 3–23 (IILVTLCLTTLLALLLLKSIL). C433 is a binding site for heme.

This sequence belongs to the cytochrome P450 family. Requires heme as cofactor.

It is found in the membrane. The chain is Cytochrome P450 71A19 (CYP71A19) from Arabidopsis thaliana (Mouse-ear cress).